A 189-amino-acid chain; its full sequence is GTP cyclohydrolase 1 (189 aa).

Residues C78, H81, and C150 each contribute to the Zn(2+) site.

It belongs to the GTP cyclohydrolase I family. In terms of assembly, toroid-shaped homodecamer, composed of two pentamers of five dimers.

It carries out the reaction GTP + H2O = 7,8-dihydroneopterin 3'-triphosphate + formate + H(+). Its pathway is cofactor biosynthesis; 7,8-dihydroneopterin triphosphate biosynthesis; 7,8-dihydroneopterin triphosphate from GTP: step 1/1. In Listeria innocua serovar 6a (strain ATCC BAA-680 / CLIP 11262), this protein is GTP cyclohydrolase 1.